We begin with the raw amino-acid sequence, 95 residues long: Opiscorpine-2 (95 aa).

The first 19 residues, 1–19 (MNNKLTALIFHGLLAIASC), serve as a signal peptide directing secretion. The BetaSPN-type CS-alpha/beta domain occupies 55–95 (EFMCMANMDPTGSCETHCQKASGEKGYCHGTKCKCGVPLSY). 3 disulfide bridges follow: Cys58-Cys82, Cys68-Cys87, and Cys72-Cys89.

It belongs to the long chain scorpion toxin family. Class 3 subfamily. In terms of tissue distribution, expressed by the venom gland.

The protein localises to the secreted. Functionally, has antimicrobial activity against yeasts and bacteria. The chain is Opiscorpine-2 from Opistophthalmus carinatus (African yellow leg scorpion).